The sequence spans 153 residues: Xanthine-guanine phosphoribosyltransferase (153 aa).

5-phospho-alpha-D-ribose 1-diphosphate-binding positions include 37–38 (RG), arginine 69, and 88–96 (DDLVDTGGT). A GMP-binding site is contributed by arginine 69. Aspartate 89 serves as a coordination point for Mg(2+). Guanine contacts are provided by aspartate 92 and isoleucine 135. 2 residues coordinate xanthine: aspartate 92 and isoleucine 135. Residues 92-96 (DTGGT) and 134-135 (WI) contribute to the GMP site.

It belongs to the purine/pyrimidine phosphoribosyltransferase family. XGPT subfamily. Homotetramer. Mg(2+) serves as cofactor.

The protein resides in the cell inner membrane. The enzyme catalyses GMP + diphosphate = guanine + 5-phospho-alpha-D-ribose 1-diphosphate. The catalysed reaction is XMP + diphosphate = xanthine + 5-phospho-alpha-D-ribose 1-diphosphate. It carries out the reaction IMP + diphosphate = hypoxanthine + 5-phospho-alpha-D-ribose 1-diphosphate. Its pathway is purine metabolism; GMP biosynthesis via salvage pathway; GMP from guanine: step 1/1. The protein operates within purine metabolism; XMP biosynthesis via salvage pathway; XMP from xanthine: step 1/1. Functionally, purine salvage pathway enzyme that catalyzes the transfer of the ribosyl-5-phosphate group from 5-phospho-alpha-D-ribose 1-diphosphate (PRPP) to the N9 position of the 6-oxopurines guanine and xanthine to form the corresponding ribonucleotides GMP (guanosine 5'-monophosphate) and XMP (xanthosine 5'-monophosphate), with the release of PPi. To a lesser extent, also acts on hypoxanthine. In Photorhabdus laumondii subsp. laumondii (strain DSM 15139 / CIP 105565 / TT01) (Photorhabdus luminescens subsp. laumondii), this protein is Xanthine-guanine phosphoribosyltransferase.